A 623-amino-acid polypeptide reads, in one-letter code: GATA zinc finger domain-containing protein 6 (623 aa).

Disordered regions lie at residues 137–156 (IISP…GNNF), 167–197 (INNN…TAST), and 245–289 (PTTT…TAST). A compositionally biased stretch (low complexity) spans 167–179 (INNNSNNNNNNNN). Residues 185–197 (KQQTSKGSATAST) show a composition bias toward polar residues. The GATA-type zinc finger occupies 320 to 345 (CHSCGETQTSQWRRGPDGCKSLCNAC). The segment at 398–509 (IQQQQQKDDH…SINHNDKLIN (112 aa)) is disordered. Low complexity predominate over residues 410-482 (LSRPSSFSSQ…TSPTISSESL (73 aa)). A compositionally biased stretch (polar residues) spans 483-502 (NFSSATNTPTNLSPNLQSIN).

This is GATA zinc finger domain-containing protein 6 (gtaF) from Dictyostelium discoideum (Social amoeba).